The sequence spans 228 residues: Protein CWC15 homolog A (228 aa).

A disordered region spans residues 1-126 (MTTAARPTFE…DEDSDDDTAA (126 aa)). Positions 24–34 (SQLSKQYSSRD) are enriched in polar residues. A compositionally biased stretch (basic and acidic residues) spans 52–84 (EEVRSRDFRRELEERERVVARDKNRDRPTREHT). A compositionally biased stretch (acidic residues) spans 102 to 124 (DADDPLTDEDGDEDSDEDSDDDT). A coiled-coil region spans residues 121 to 165 (DDDTAALLAELEKIKKERAEEKDRKELEQKAEEERIRMENILSGN).

Belongs to the CWC15 family. In terms of assembly, identified in the spliceosome C complex. Component of the minor spliceosome, which splices U12-type introns.

It is found in the nucleus. In terms of biological role, involved in pre-mRNA splicing as component of the spliceosome. The polypeptide is Protein CWC15 homolog A (cwc15-a) (Xenopus laevis (African clawed frog)).